We begin with the raw amino-acid sequence, 779 residues long: Lon protease (779 aa).

One can recognise a Lon N-terminal domain in the interval 7-190 (VPVLFLNDSI…LLIGWTGDHL (184 aa)). An ATP-binding site is contributed by 352-359 (GPPGVGKT). Positions 589 to 769 (TAVPGVATGL…ADIIAAALEP (181 aa)) constitute a Lon proteolytic domain. Residues serine 675 and lysine 718 contribute to the active site.

The protein belongs to the peptidase S16 family. In terms of assembly, homohexamer. Organized in a ring with a central cavity. Oligomerization is Mg(2+)-dependent.

It is found in the cytoplasm. It catalyses the reaction Hydrolysis of proteins in presence of ATP.. With respect to regulation, stimulated by unfolded protein. ATP-dependent serine protease that mediates the selective degradation of mutant and abnormal proteins as well as certain short-lived regulatory proteins. Required for cellular homeostasis and for survival from DNA damage and developmental changes induced by stress. Degrades polypeptides processively to yield small peptide fragments that are 5 to 10 amino acids long. Binds to DNA in a double-stranded, site-specific manner. The sequence is that of Lon protease from Mycolicibacterium smegmatis (Mycobacterium smegmatis).